A 381-amino-acid polypeptide reads, in one-letter code: MTETQSLELAKALISRPSVTPDDRDCQKLLAERLHKIGFAAEELHFGDTKNIWLRRGTKAPVVCFAGHTDVVPTGPVEKWDSPPFEPTERDGRLYGRGAADMKTSIACFVTACERFVAEHPDHQGSIALLITSDEEGDALDGTTKVVDVLKARGELIDYCIVGEPTAVDKLGDMIKNGRRGSLSGNLTVKGKQGHIAYPHLAVNPVHTFAPALLELTQEVWDEGNEYFPPTSFQISNINGGTGATNVIPGELNVKFNFRFSTESTETGLKQRVHAILDKHGVQYDLQWSCSGQPFLTHAGKLTDVARTAIAETCGVEAELSTTGGTSDGRFIKAIAKELIELGPSNATIHQINENVRLDDIPKLSAVYERILARLLAEKAV.

His68 contacts Zn(2+). The active site involves Asp70. Asp101 contributes to the Zn(2+) binding site. The active-site Proton acceptor is the Glu135. Zn(2+) is bound by residues Glu136, Glu164, and His350.

This sequence belongs to the peptidase M20A family. DapE subfamily. In terms of assembly, homodimer. It depends on Zn(2+) as a cofactor. Co(2+) is required as a cofactor.

It carries out the reaction N-succinyl-(2S,6S)-2,6-diaminopimelate + H2O = (2S,6S)-2,6-diaminopimelate + succinate. The protein operates within amino-acid biosynthesis; L-lysine biosynthesis via DAP pathway; LL-2,6-diaminopimelate from (S)-tetrahydrodipicolinate (succinylase route): step 3/3. In terms of biological role, catalyzes the hydrolysis of N-succinyl-L,L-diaminopimelic acid (SDAP), forming succinate and LL-2,6-diaminopimelate (DAP), an intermediate involved in the bacterial biosynthesis of lysine and meso-diaminopimelic acid, an essential component of bacterial cell walls. In Neisseria gonorrhoeae (strain NCCP11945), this protein is Succinyl-diaminopimelate desuccinylase.